Reading from the N-terminus, the 385-residue chain is SWI/SNF-related matrix-associated actin-dependent regulator of chromatin subfamily B member 1 (385 aa).

A DNA-binding region spans residues 1–113 (MMMMALSKTF…DEKYKAVSIS (113 aa)). Glycyl lysine isopeptide (Lys-Gly) (interchain with G-Cter in SUMO2) cross-links involve residues Lys-106, Lys-108, and Lys-124. Ser-129 carries the phosphoserine modification. Lys-161 is covalently cross-linked (Glycyl lysine isopeptide (Lys-Gly) (interchain with G-Cter in SUMO2)). Residues 183–243 (PEVLVPIRLD…VPAIASAIRQ (61 aa)) are HIV-1 integrase-binding. 2 consecutive repeat copies span residues 186–245 (LVPI…RQQI) and 259–319 (DQRV…RGQL). Positions 186 to 245 (LVPIRLDMEIDGQKLRDAFTWNMNEKLMTPEMFSEILCDDLDLNPLTFVPAIASAIRQQI) are MYC-binding. Residues 186 to 319 (LVPIRLDMEI…TIAYSIRGQL (134 aa)) are 2 X approximate tandem repeats. The tract at residues 304 to 318 (GGEFVTTIAYSIRGQ) is interaction with PPP1R15A.

This sequence belongs to the SNF5 family. As to quaternary structure, component of the multiprotein chromatin-remodeling complexes SWI/SNF: SWI/SNF-A (BAF), SWI/SNF-B (PBAF) and related complexes. The canonical complex contains a catalytic subunit (either SMARCA4/BRG1/BAF190A or SMARCA2/BRM/BAF190B) and at least SMARCE1, ACTL6A/BAF53, SMARCC1/BAF155, SMARCC2/BAF170, and SMARCB1/SNF5/BAF47. Other subunits specific to each of the complexes may also be present permitting several possible combinations developmentally and tissue specific. Component of the BAF complex, which includes at least actin (ACTB), ARID1A/BAF250A, ARID1B/BAF250B, SMARCA2/BRM, SMARCA4/BRG1/BAF190A, ACTL6A/BAF53, ACTL6B/BAF53B, SMARCE1/BAF57 SMARCC1/BAF155, SMARCC2/BAF170, SMARCB1/SNF5/INI1, and one or more SMARCD1/BAF60A, SMARCD2/BAF60B, or SMARCD3/BAF60C. In muscle cells, the BAF complex also contains DPF3. Component of neural progenitors-specific chromatin remodeling complex (npBAF complex) composed of at least, ARID1A/BAF250A or ARID1B/BAF250B, SMARCD1/BAF60A, SMARCD3/BAF60C, SMARCA2/BRM/BAF190B, SMARCA4/BRG1/BAF190A, SMARCB1/BAF47, SMARCC1/BAF155, SMARCE1/BAF57, SMARCC2/BAF170, PHF10/BAF45A, ACTL6A/BAF53A and actin. Component of neuron-specific chromatin remodeling complex (nBAF complex) composed of at least, ARID1A/BAF250A or ARID1B/BAF250B, SMARCD1/BAF60A, SMARCD3/BAF60C, SMARCA2/BRM/BAF190B, SMARCA4/BRG1/BAF190A, SMARCB1/BAF47, SMARCC1/BAF155, SMARCE1/BAF57, SMARCC2/BAF170, DPF1/BAF45B, DPF3/BAF45C, ACTL6B/BAF53B and actin. Component of the SWI/SNF-B (PBAF) chromatin remodeling complex, at least composed of SMARCA4/BRG1, SMARCB1/BAF47/SNF5, ACTL6A/BAF53A or ACTL6B/BAF53B, SMARCE1/BAF57, SMARCD1/BAF60A, SMARCD2/BAF60B, perhaps SMARCD3/BAF60C, SMARCC1/BAF155, SMARCC2/BAF170, PBRM1/BAF180, ARID2/BAF200 and actin. Binds to double-stranded DNA. Interacts with CEBPB (when not methylated). Interacts with PIH1D1. Interacts with MYK and MAEL. Interacts with PPP1R15A. Interacts with DPF2. Interacts with YWHAZ. Interacts with ERCC6. Interacts with FOS, FOSB isoform 1 and 2, FOSL1 and FOSL2. In terms of assembly, (Microbial infection) Binds tightly to the human immunodeficiency virus-type 1 (HIV-1) integrase in vitro and stimulates its DNA-joining activity. Interacts with human papillomavirus 18 E1 protein to stimulate its viral replication. Interacts with Epstein-Barr virus protein EBNA-2.

It localises to the nucleus. In terms of biological role, core component of the BAF (hSWI/SNF) complex. This ATP-dependent chromatin-remodeling complex plays important roles in cell proliferation and differentiation, in cellular antiviral activities and inhibition of tumor formation. The BAF complex is able to create a stable, altered form of chromatin that constrains fewer negative supercoils than normal. This change in supercoiling would be due to the conversion of up to one-half of the nucleosomes on polynucleosomal arrays into asymmetric structures, termed altosomes, each composed of 2 histones octamers. Stimulates in vitro the remodeling activity of SMARCA4/BRG1/BAF190A. Involved in activation of CSF1 promoter. Belongs to the neural progenitors-specific chromatin remodeling complex (npBAF complex) and the neuron-specific chromatin remodeling complex (nBAF complex). During neural development a switch from a stem/progenitor to a postmitotic chromatin remodeling mechanism occurs as neurons exit the cell cycle and become committed to their adult state. The transition from proliferating neural stem/progenitor cells to postmitotic neurons requires a switch in subunit composition of the npBAF and nBAF complexes. As neural progenitors exit mitosis and differentiate into neurons, npBAF complexes which contain ACTL6A/BAF53A and PHF10/BAF45A, are exchanged for homologous alternative ACTL6B/BAF53B and DPF1/BAF45B or DPF3/BAF45C subunits in neuron-specific complexes (nBAF). The npBAF complex is essential for the self-renewal/proliferative capacity of the multipotent neural stem cells. The nBAF complex along with CREST plays a role regulating the activity of genes essential for dendrite growth. Plays a key role in cell-cycle control and causes cell cycle arrest in G0/G1. This is SWI/SNF-related matrix-associated actin-dependent regulator of chromatin subfamily B member 1 (SMARCB1) from Homo sapiens (Human).